We begin with the raw amino-acid sequence, 132 residues long: uncharacterized protein (132 aa).

A signal peptide spans 1-19; the sequence is MKKALFLVGLVFTAGVISS. Cys-20 is lipidated: N-palmitoyl cysteine. Residue Cys-20 is the site of S-diacylglycerol cysteine attachment.

Its subcellular location is the cell membrane. This is an uncharacterized protein from Aquifex aeolicus (strain VF5).